The following is a 644-amino-acid chain: CTP synthase (644 aa).

One can recognise a Glutamine amidotransferase type-1 domain in the interval 300 to 551 (SIAIVGKYTK…LGLILASVDR (252 aa)). Active-site for GATase activity residues include Cys-399, His-527, and Glu-529.

It belongs to the CTP synthase family.

The enzyme catalyses UTP + L-glutamine + ATP + H2O = CTP + L-glutamate + ADP + phosphate + 2 H(+). Its pathway is pyrimidine metabolism; CTP biosynthesis via de novo pathway; CTP from UDP: step 2/2. Catalyzes the ATP-dependent amination of UTP to CTP with either L-glutamine or ammonia as the source of nitrogen. Constitutes the rate-limiting enzyme in the synthesis of cytosine nucleotides. This chain is CTP synthase, found in Drosophila pseudoobscura pseudoobscura (Fruit fly).